A 189-amino-acid polypeptide reads, in one-letter code: Alanine and glycine-rich protein (189 aa).

Over residues 127 to 160 the composition is skewed to gly residues; it reads AGAGGGSGGGGGGGSGSGGSGGSGGSGGSGGNDG. A disordered region spans residues 127–170; the sequence is AGAGGGSGGGGGGGSGSGGSGGSGGSGGSGGNDGNDGNDGSSSR.

Component of the organic matrix of calcified shell layers like nacre and prisms.

It is found in the secreted. The chain is Alanine and glycine-rich protein from Mytilus californianus (California mussel).